Reading from the N-terminus, the 398-residue chain is 2-epi-5-epi-valiolone synthase (398 aa).

Residues D62, 93 to 96 (ETVK), 126 to 130 (GVLMD), 150 to 151 (TT), K163, K172, and 190 to 193 (FLAT) each bind NAD(+). K163 is a catalytic residue. A divalent metal cation-binding residues include E205, H276, and H292.

It belongs to the sugar phosphate cyclases superfamily. EEVS family. The cofactor is NAD(+). It depends on Co(2+) as a cofactor.

It carries out the reaction D-sedoheptulose 7-phosphate = 2-epi-5-epi-valiolone + phosphate. Functionally, catalyzes the cyclization of D-sedoheptulose 7-phosphate to 2-epi-5-epi-valiolone. Does not use ido-heptulose 7-phosphate and 3-deoxy-arabino-heptulosonate 7-phosphate. Involved in the biosynthesis of the acarviose moiety of the alpha-glucosidase inhibitor acarbose. The chain is 2-epi-5-epi-valiolone synthase from Actinoplanes sp. (strain ATCC 31044 / CBS 674.73 / SE50/110).